Consider the following 246-residue polypeptide: ATP synthase subunit a, chloroplastic (246 aa).

The next 5 helical transmembrane spans lie at 33–53 (VHGQ…GFGL), 99–119 (TIFL…WALI), 133–153 (INTT…AGIN), 201–221 (GVLV…LGLF), and 222–242 (TSAI…GESL).

Belongs to the ATPase A chain family. F-type ATPases have 2 components, CF(1) - the catalytic core - and CF(0) - the membrane proton channel. CF(1) has five subunits: alpha(3), beta(3), gamma(1), delta(1), epsilon(1). CF(0) has four main subunits: a, b, b' and c.

It localises to the plastid. It is found in the chloroplast thylakoid membrane. Key component of the proton channel; it plays a direct role in the translocation of protons across the membrane. This is ATP synthase subunit a, chloroplastic from Oltmannsiellopsis viridis (Marine flagellate).